We begin with the raw amino-acid sequence, 609 residues long: Pogo transposable element with KRAB domain (609 aa).

Disordered stretches follow at residues 1–28 (MESTAYPLNLSLKEEEEEEEIQSRELED) and 100–127 (EGEEESQNSDEWQLQGGTSAENEESDVK). Residues 8–28 (LNLSLKEEEEEEEIQSRELED) are a coiled coil. K13 participates in a covalent cross-link: Glycyl lysine isopeptide (Lys-Gly) (interchain with G-Cter in SUMO2). In terms of domain architecture, KRAB spans 47–118 (ALFDEVAIYF…DEWQLQGGTS (72 aa)). Positions 108-119 (SDEWQLQGGTSA) are enriched in polar residues. In terms of domain architecture, HTH CENPB-type spans 250-323 (AFRGPKNGRF…MRRYDLSLRH (74 aa)). Residues 353–567 (HDYEVAQMGN…ISSESIVQGF (215 aa)) enclose the DDE-1 domain. Residue K384 forms a Glycyl lysine isopeptide (Lys-Gly) (interchain with G-Cter in SUMO2) linkage. A disordered region spans residues 588–609 (SELPGGGEPPKDCDTESMAESN).

It is found in the nucleus. This chain is Pogo transposable element with KRAB domain (POGK), found in Homo sapiens (Human).